The following is a 213-amino-acid chain: Validoxylamine A 7'-phosphate phosphatase (213 aa).

D8 (nucleophile) is an active-site residue. 2 residues coordinate a divalent metal cation: D8 and D10. Residues 8–10 (DLD), 107–108 (TS), and K140 contribute to the substrate site. D10 functions as the Proton donor in the catalytic mechanism. Position 165 (D165) interacts with a divalent metal cation.

It belongs to the HAD-like hydrolase superfamily. CbbY/CbbZ/Gph/YieH family. Mg(2+) serves as cofactor. The cofactor is Mn(2+). Co(2+) is required as a cofactor.

It catalyses the reaction validoxylamine A 7'-phosphate + H2O = validoxylamine A + phosphate. Functionally, involved in the biosynthesis of the antifungal agent validamycin A. Catalyzes the dephosphorylation of validoxylamine A 7'-phosphate to yield validoxylamine A. VldH is also able to convert trehalose 6-phosphate to trehalose. This Streptomyces hygroscopicus subsp. limoneus protein is Validoxylamine A 7'-phosphate phosphatase.